The chain runs to 424 residues: MKLIKNGKVLQNGELQQADILIDGKVIKQIAPAIEPSNGIDIIDAKGHFVSPGFVDVHVHLREPGGEYKETIETGTKAAARGGFTTVCPMPNTRPVPDSVEHFEALQKLIDDNAQVRVLPYASITTRQLGKELVDFPALVKEGAFAFTDDGVGVQTASMMYEGMIEAAKVNKAIVAHCEDNSLIYGGAMHEGKRSKELGIPGIPNICESVQIARDVLLAEAAGCHYHVCHVSTKESVRVIRDAKRAGIHVTAEVTPHHLLLTEDDIPGNNAIYKMNPPLRSTEDREALLEGLLDGTIDCIATDHAPHARDEKAQPMEKAPFGIVGSETAFPLLYTHFVKNGDWTLQQLVDYLTIKPCETFNLEYGTLKENGYADLTIIDLDSEQEIKGEDFLSKADNTPFIGYKVYGNPILTMVEGEVKFEGDK.

Zn(2+) is bound by residues His58 and His60. Substrate-binding positions include 60 to 62 and Asn92; that span reads HLR. 3 residues coordinate Zn(2+): Asp150, His177, and His230. A substrate-binding site is contributed by Asn276. Zn(2+) is bound at residue Asp303. Asp303 is a catalytic residue. Residues His307 and 321–322 contribute to the substrate site; that span reads FG.

It belongs to the metallo-dependent hydrolases superfamily. DHOase family. Class I DHOase subfamily. Requires Zn(2+) as cofactor.

The catalysed reaction is (S)-dihydroorotate + H2O = N-carbamoyl-L-aspartate + H(+). Its pathway is pyrimidine metabolism; UMP biosynthesis via de novo pathway; (S)-dihydroorotate from bicarbonate: step 3/3. In terms of biological role, catalyzes the reversible cyclization of carbamoyl aspartate to dihydroorotate. The chain is Dihydroorotase from Staphylococcus aureus (strain MRSA252).